Here is a 110-residue protein sequence, read N- to C-terminus: Putative membrane protein insertion efficiency factor (110 aa).

The protein belongs to the UPF0161 family.

The protein resides in the cell inner membrane. In terms of biological role, could be involved in insertion of integral membrane proteins into the membrane. The chain is Putative membrane protein insertion efficiency factor from Aliarcobacter butzleri (strain RM4018) (Arcobacter butzleri).